The following is a 223-amino-acid chain: Imidazoleglycerol-phosphate dehydratase (223 aa).

It belongs to the imidazoleglycerol-phosphate dehydratase family.

It catalyses the reaction D-erythro-1-(imidazol-4-yl)glycerol 3-phosphate = 3-(imidazol-4-yl)-2-oxopropyl phosphate + H2O. It participates in amino-acid biosynthesis; L-histidine biosynthesis; L-histidine from 5-phospho-alpha-D-ribose 1-diphosphate: step 6/9. In Zygosaccharomyces bailii, this protein is Imidazoleglycerol-phosphate dehydratase (HIS3).